We begin with the raw amino-acid sequence, 3096 residues long: Cilia- and flagella-associated protein 54 (3096 aa).

Residues 1 to 45 show a composition bias toward low complexity; sequence MAAQGSPSSSPSDDSTTSGSLPELPPTSTATSRSPPESKGSSRSS. Disordered regions lie at residues 1 to 46 and 1248 to 1267; these read MAAQ…RSSL and SNEQ…LKTK.

This sequence belongs to the CFAP54 family.

Its subcellular location is the cytoplasm. The protein localises to the cytoskeleton. The protein resides in the cilium axoneme. Functionally, required for assembly and function of cilia and flagella. In Homo sapiens (Human), this protein is Cilia- and flagella-associated protein 54.